We begin with the raw amino-acid sequence, 175 residues long: Pathogenesis-related protein 1A1 (175 aa).

The signal sequence occupies residues 1–21 (MKSSIFVACFITFIIFHSSQA). Residues 29-146 (LNAHNAARRR…SGWVFITCNY (118 aa)) form the SCP domain. Disulfide bonds link Cys65/Cys135, Cys108/Cys114, and Cys130/Cys144.

This sequence belongs to the CRISP family.

Its function is as follows. Probably involved in the defense reaction of plants against pathogens. The sequence is that of Pathogenesis-related protein 1A1 from Solanum lycopersicum (Tomato).